The following is a 375-amino-acid chain: Queuine tRNA-ribosyltransferase (375 aa).

D89 acts as the Proton acceptor in catalysis. Substrate contacts are provided by residues 89–93, D143, Q185, and G212; that span reads DSGGF. Residues 243-249 are RNA binding; the sequence is GVGKPED. D262 (nucleophile) is an active-site residue. Positions 267–271 are RNA binding; important for wobble base 34 recognition; the sequence is TRNAR. Residues C300, C302, C305, and H331 each coordinate Zn(2+).

It belongs to the queuine tRNA-ribosyltransferase family. Homodimer. Within each dimer, one monomer is responsible for RNA recognition and catalysis, while the other monomer binds to the replacement base PreQ1. Requires Zn(2+) as cofactor.

It catalyses the reaction 7-aminomethyl-7-carbaguanine + guanosine(34) in tRNA = 7-aminomethyl-7-carbaguanosine(34) in tRNA + guanine. Its pathway is tRNA modification; tRNA-queuosine biosynthesis. Its function is as follows. Catalyzes the base-exchange of a guanine (G) residue with the queuine precursor 7-aminomethyl-7-deazaguanine (PreQ1) at position 34 (anticodon wobble position) in tRNAs with GU(N) anticodons (tRNA-Asp, -Asn, -His and -Tyr). Catalysis occurs through a double-displacement mechanism. The nucleophile active site attacks the C1' of nucleotide 34 to detach the guanine base from the RNA, forming a covalent enzyme-RNA intermediate. The proton acceptor active site deprotonates the incoming PreQ1, allowing a nucleophilic attack on the C1' of the ribose to form the product. After dissociation, two additional enzymatic reactions on the tRNA convert PreQ1 to queuine (Q), resulting in the hypermodified nucleoside queuosine (7-(((4,5-cis-dihydroxy-2-cyclopenten-1-yl)amino)methyl)-7-deazaguanosine). This is Queuine tRNA-ribosyltransferase from Pseudoalteromonas translucida (strain TAC 125).